A 214-amino-acid polypeptide reads, in one-letter code: EEF1A lysine methyltransferase 1 (214 aa).

At Ser-2 the chain carries N-acetylserine. Position 2 is a phosphoserine (Ser-2).

The protein belongs to the class I-like SAM-binding methyltransferase superfamily. EFM5 family.

It localises to the cytoplasm. The catalysed reaction is L-lysyl-[protein] + 3 S-adenosyl-L-methionine = N(6),N(6),N(6)-trimethyl-L-lysyl-[protein] + 3 S-adenosyl-L-homocysteine + 3 H(+). Its function is as follows. Protein N-lysine methyltransferase that selectively catalyzes the trimethylation of EEF1A at 'Lys-79'. This is EEF1A lysine methyltransferase 1 from Homo sapiens (Human).